A 94-amino-acid chain; its full sequence is Large ribosomal subunit protein bL25 (94 aa).

This sequence belongs to the bacterial ribosomal protein bL25 family. In terms of assembly, part of the 50S ribosomal subunit; part of the 5S rRNA/L5/L18/L25 subcomplex. Contacts the 5S rRNA. Binds to the 5S rRNA independently of L5 and L18.

Functionally, this is one of the proteins that binds to the 5S RNA in the ribosome where it forms part of the central protuberance. The polypeptide is Large ribosomal subunit protein bL25 (Escherichia coli O157:H7).